The sequence spans 91 residues: Large ribosomal subunit protein bL27 (91 aa).

It belongs to the bacterial ribosomal protein bL27 family.

In Pseudomonas savastanoi pv. phaseolicola (strain 1448A / Race 6) (Pseudomonas syringae pv. phaseolicola (strain 1448A / Race 6)), this protein is Large ribosomal subunit protein bL27.